A 170-amino-acid polypeptide reads, in one-letter code: Cytochrome b6-f complex subunit 4 (170 aa).

3 helical membrane-spanning segments follow: residues 46–66, 105–125, and 141–161; these read LLFM…GLSV, LLGI…PFIE, and TVFL…TLPL.

The protein belongs to the cytochrome b family. PetD subfamily. As to quaternary structure, the 4 large subunits of the cytochrome b6-f complex are cytochrome b6, subunit IV (17 kDa polypeptide, PetD), cytochrome f and the Rieske protein, while the 4 small subunits are PetG, PetL, PetM and PetN. The complex functions as a dimer.

The protein localises to the cellular thylakoid membrane. Functionally, component of the cytochrome b6-f complex, which mediates electron transfer between photosystem II (PSII) and photosystem I (PSI), cyclic electron flow around PSI, and state transitions. The polypeptide is Cytochrome b6-f complex subunit 4 (Synechococcus sp. (strain JA-2-3B'a(2-13)) (Cyanobacteria bacterium Yellowstone B-Prime)).